The primary structure comprises 64 residues: Conotoxin VnMRCL-04 (64 aa).

The first 22 residues, 1-22, serve as a signal peptide directing secretion; that stretch reads MRCLPVFVILLLLIASAPSVDA. Residues 23–48 constitute a propeptide that is removed on maturation; that stretch reads RPKTKDDVPLASFHGNAERTLLNILR. Trp63 carries the tryptophan amide modification.

It belongs to the conotoxin T superfamily. Contains 2 disulfide bonds that can be either 'C1-C3, C2-C4' or 'C1-C4, C2-C3', since these disulfide connectivities have been observed for conotoxins with cysteine framework V (for examples, see AC P0DQQ7 and AC P81755). As to expression, expressed by the venom duct.

The protein localises to the secreted. This is Conotoxin VnMRCL-04 from Conus ventricosus (Mediterranean cone).